Here is a 305-residue protein sequence, read N- to C-terminus: GMP synthase [glutamine-hydrolyzing] subunit B (305 aa).

A GMPS ATP-PPase domain is found at 2 to 185 (VEPTAFIDEK…LDLESIIAER (184 aa)). 29–35 (SGGVDSS) serves as a coordination point for ATP.

Heterodimer composed of a glutamine amidotransferase subunit (A) and a GMP-binding subunit (B).

It catalyses the reaction XMP + L-glutamine + ATP + H2O = GMP + L-glutamate + AMP + diphosphate + 2 H(+). Its pathway is purine metabolism; GMP biosynthesis; GMP from XMP (L-Gln route): step 1/1. Functionally, catalyzes the synthesis of GMP from XMP. The chain is GMP synthase [glutamine-hydrolyzing] subunit B from Natronomonas pharaonis (strain ATCC 35678 / DSM 2160 / CIP 103997 / JCM 8858 / NBRC 14720 / NCIMB 2260 / Gabara) (Halobacterium pharaonis).